The primary structure comprises 242 residues: MAGHSKWANIQHKKARQDAKRGKIFTRLIKEITVAARMGGGDPGANPRLRLALEKAAENNMPKDNVQRAIDKGTGNLEGVEYIELRYEGYGIGGAALMVDCLTDNKTRTVADVRHAFTKNGGNLGTDGCVAFNFVHQGYLVFEPGVDEDELMEAALEAGAEDVVTNDDGSIEVITAPNDWAGVKSALEAAGYKSVDGDVTMRAQNETELSGDDAVKMQKLIDALEDLDDVQDVYTSAVLNLD.

The protein belongs to the TACO1 family.

Its subcellular location is the cytoplasm. The chain is Probable transcriptional regulatory protein NGO_1291 from Neisseria gonorrhoeae (strain ATCC 700825 / FA 1090).